A 715-amino-acid polypeptide reads, in one-letter code: Fatty acid oxidation complex subunit alpha (715 aa).

Residues 1-190 form an enoyl-CoA hydratase region; that stretch reads MTTTSAFMLN…KAGLVDDVVP (190 aa). The tract at residues 306-715 is 3-hydroxyacyl-CoA dehydrogenase; the sequence is GPLNSVGILG…WTNGETDQGN (410 aa).

It in the N-terminal section; belongs to the enoyl-CoA hydratase/isomerase family. This sequence in the central section; belongs to the 3-hydroxyacyl-CoA dehydrogenase family. Heterotetramer of two alpha chains (FadJ) and two beta chains (FadI).

It localises to the cytoplasm. The enzyme catalyses a (3S)-3-hydroxyacyl-CoA = a (2E)-enoyl-CoA + H2O. It catalyses the reaction a 4-saturated-(3S)-3-hydroxyacyl-CoA = a (3E)-enoyl-CoA + H2O. The catalysed reaction is a (3S)-3-hydroxyacyl-CoA + NAD(+) = a 3-oxoacyl-CoA + NADH + H(+). It carries out the reaction (3S)-3-hydroxybutanoyl-CoA = (3R)-3-hydroxybutanoyl-CoA. The protein operates within lipid metabolism; fatty acid beta-oxidation. Its function is as follows. Catalyzes the formation of a hydroxyacyl-CoA by addition of water on enoyl-CoA. Also exhibits 3-hydroxyacyl-CoA epimerase and 3-hydroxyacyl-CoA dehydrogenase activities. This chain is Fatty acid oxidation complex subunit alpha, found in Salmonella newport (strain SL254).